Reading from the N-terminus, the 199-residue chain is MYEGVVQDLIDELGRLPGVGPKSAQRIAFHILQAEPVDVRRLAQALMEVKAKVRFCATCGNVAQEEQCNICRDTRRDPSVICVVEEPKDVVAIERTREFRGRYHVLGGAISPIDGVGPDDLRIRELLARLADGSVTELILATDPNLEGEATATYLARMIKPMGLKVTRLASGLPVGGDLEYADEVTLGRAFEGRRLLDV.

The C4-type zinc-finger motif lies at 56–71 (CATCGNVAQEEQCNIC). The 96-residue stretch at 79 to 174 (SVICVVEEPK…KVTRLASGLP (96 aa)) folds into the Toprim domain.

The protein belongs to the RecR family.

Its function is as follows. May play a role in DNA repair. It seems to be involved in an RecBC-independent recombinational process of DNA repair. It may act with RecF and RecO. The chain is Recombination protein RecR from Streptomyces coelicolor (strain ATCC BAA-471 / A3(2) / M145).